Consider the following 92-residue polypeptide: Small ribosomal subunit protein uS19 (92 aa).

Belongs to the universal ribosomal protein uS19 family.

Protein S19 forms a complex with S13 that binds strongly to the 16S ribosomal RNA. This Bartonella henselae (strain ATCC 49882 / DSM 28221 / CCUG 30454 / Houston 1) (Rochalimaea henselae) protein is Small ribosomal subunit protein uS19.